The primary structure comprises 456 residues: Probable glycine dehydrogenase (decarboxylating) subunit 1 (456 aa).

The protein belongs to the GcvP family. N-terminal subunit subfamily. In terms of assembly, the glycine cleavage system is composed of four proteins: P, T, L and H. In this organism, the P 'protein' is a heterodimer of two subunits.

It catalyses the reaction N(6)-[(R)-lipoyl]-L-lysyl-[glycine-cleavage complex H protein] + glycine + H(+) = N(6)-[(R)-S(8)-aminomethyldihydrolipoyl]-L-lysyl-[glycine-cleavage complex H protein] + CO2. In terms of biological role, the glycine cleavage system catalyzes the degradation of glycine. The P protein binds the alpha-amino group of glycine through its pyridoxal phosphate cofactor; CO(2) is released and the remaining methylamine moiety is then transferred to the lipoamide cofactor of the H protein. The sequence is that of Probable glycine dehydrogenase (decarboxylating) subunit 1 from Legionella pneumophila (strain Lens).